A 1057-amino-acid chain; its full sequence is Carbamoyl phosphate synthase large chain (1057 aa).

The carboxyphosphate synthetic domain stretch occupies residues 1–401 (MPKRNDIKTI…SLLKAIRSLE (401 aa)). Residues R129, R169, G175, G176, K208, I210, E215, G241, I242, H243, Q284, and E298 each coordinate ATP. The 195-residue stretch at 133–327 (RTLMNDLNVP…IAKLAAKIAV (195 aa)) folds into the ATP-grasp 1 domain. Mg(2+) is bound by residues Q284, E298, and N300. The Mn(2+) site is built by Q284, E298, and N300. The interval 402-546 (YGVHHLGLPN…YGTYETENES (145 aa)) is oligomerization domain. The interval 547-929 (IVTDKEKILV…ALFKGLTGSG (383 aa)) is carbamoyl phosphate synthetic domain. The ATP-grasp 2 domain maps to 671 to 861 (EALLRKINVP…MAQLAMRAII (191 aa)). Residues R707, R746, L748, E752, G777, V778, H779, S780, Q820, and E832 each contribute to the ATP site. Q820, E832, and N834 together coordinate Mg(2+). The Mn(2+) site is built by Q820, E832, and N834. The 128-residue stretch at 930–1057 (VEVKDHGTVL…ESMTFTMRQM (128 aa)) folds into the MGS-like domain. The segment at 930-1057 (VEVKDHGTVL…ESMTFTMRQM (128 aa)) is allosteric domain.

It belongs to the CarB family. In terms of assembly, composed of two chains; the small (or glutamine) chain promotes the hydrolysis of glutamine to ammonia, which is used by the large (or ammonia) chain to synthesize carbamoyl phosphate. Tetramer of heterodimers (alpha,beta)4. Requires Mg(2+) as cofactor. Mn(2+) is required as a cofactor.

It carries out the reaction hydrogencarbonate + L-glutamine + 2 ATP + H2O = carbamoyl phosphate + L-glutamate + 2 ADP + phosphate + 2 H(+). The enzyme catalyses hydrogencarbonate + NH4(+) + 2 ATP = carbamoyl phosphate + 2 ADP + phosphate + 2 H(+). It functions in the pathway amino-acid biosynthesis; L-arginine biosynthesis; carbamoyl phosphate from bicarbonate: step 1/1. It participates in pyrimidine metabolism; UMP biosynthesis via de novo pathway; (S)-dihydroorotate from bicarbonate: step 1/3. In terms of biological role, large subunit of the glutamine-dependent carbamoyl phosphate synthetase (CPSase). CPSase catalyzes the formation of carbamoyl phosphate from the ammonia moiety of glutamine, carbonate, and phosphate donated by ATP, constituting the first step of 2 biosynthetic pathways, one leading to arginine and/or urea and the other to pyrimidine nucleotides. The large subunit (synthetase) binds the substrates ammonia (free or transferred from glutamine from the small subunit), hydrogencarbonate and ATP and carries out an ATP-coupled ligase reaction, activating hydrogencarbonate by forming carboxy phosphate which reacts with ammonia to form carbamoyl phosphate. The protein is Carbamoyl phosphate synthase large chain of Staphylococcus aureus (strain Mu3 / ATCC 700698).